A 38-amino-acid chain; its full sequence is Photosystem II reaction center protein L (38 aa).

A helical membrane pass occupies residues 17–37 (SLYWGLLLIFVLAILFSSYIF).

This sequence belongs to the PsbL family. In terms of assembly, PSII is composed of 1 copy each of membrane proteins PsbA, PsbB, PsbC, PsbD, PsbE, PsbF, PsbH, PsbI, PsbJ, PsbK, PsbL, PsbM, PsbT, PsbX, PsbY, PsbZ, Psb30/Ycf12, at least 3 peripheral proteins of the oxygen-evolving complex and a large number of cofactors. It forms dimeric complexes.

The protein resides in the plastid. Its subcellular location is the chloroplast thylakoid membrane. Functionally, one of the components of the core complex of photosystem II (PSII). PSII is a light-driven water:plastoquinone oxidoreductase that uses light energy to abstract electrons from H(2)O, generating O(2) and a proton gradient subsequently used for ATP formation. It consists of a core antenna complex that captures photons, and an electron transfer chain that converts photonic excitation into a charge separation. This subunit is found at the monomer-monomer interface and is required for correct PSII assembly and/or dimerization. This is Photosystem II reaction center protein L from Mesostigma viride (Green alga).